We begin with the raw amino-acid sequence, 396 residues long: MAEKEHYERTKPHVNIGTIGHVDHGKTTLTAAITKVLSEKGLAQAQDYASIDAAPEERERGITINTAHVEYETDKRHYAHIDAPGHADYVKNMITGAAQMDGAILVVAATDGPMPQTREHILLARQVGVNYIVVFLNKTDLVDDPELIDLVEMEVRELLSEYDFPGDDIPIIRGSALKALQGDPEQEKVILHLMDVIDEYIPTPVRDVDKPFLMPVEDVFTITGRGTVASGRIDRGTVKINDPVEIVGLKDEVKNTVVTGVEMFRKTLDLGEAGDNIGALLRGIDRDGVERGQVLAKPGSIQTHKKFKGEVYILTKEEGGRHTPFFTNYRPQFYFHTTDVTGVVELPEGVEMVMPGDHVTFTVELMKPVAIEKGLKFTIREGGHTVGAGTVSEIDD.

The tr-type G domain maps to 11–205; sequence KPHVNIGTIG…VIDEYIPTPV (195 aa). The tract at residues 20 to 27 is G1; sequence GHVDHGKT. Residue 20–27 coordinates GTP; that stretch reads GHVDHGKT. Residue Thr27 participates in Mg(2+) binding. A G2 region spans residues 61-65; the sequence is GITIN. The G3 stretch occupies residues 82-85; that stretch reads DAPG. GTP is bound by residues 82-86 and 137-140; these read DAPGH and NKTD. Residues 137-140 form a G4 region; the sequence is NKTD. Positions 175–177 are G5; it reads SAL.

The protein belongs to the TRAFAC class translation factor GTPase superfamily. Classic translation factor GTPase family. EF-Tu/EF-1A subfamily. In terms of assembly, monomer.

It localises to the cytoplasm. The catalysed reaction is GTP + H2O = GDP + phosphate + H(+). GTP hydrolase that promotes the GTP-dependent binding of aminoacyl-tRNA to the A-site of ribosomes during protein biosynthesis. The chain is Elongation factor Tu from Oenococcus oeni (strain ATCC BAA-331 / PSU-1).